The following is a 450-amino-acid chain: Saccharopine dehydrogenase [NADP(+), L-glutamate-forming] (450 aa).

Residues 11 to 14 (SGFV), 33 to 35 (CRT), 55 to 56 (DV), Ile-76, 98 to 99 (TS), 125 to 127 (LDP), and Ser-175 contribute to the NADP(+) site. Residues 99–100 (SY) and Asp-126 each bind L-saccharopine. Residues Arg-224 and 245–247 (TLR) each bind L-saccharopine.

It belongs to the saccharopine dehydrogenase family. As to quaternary structure, homodimer.

The catalysed reaction is L-saccharopine + NADP(+) + H2O = (S)-2-amino-6-oxohexanoate + L-glutamate + NADPH + H(+). The protein operates within amino-acid biosynthesis; L-lysine biosynthesis via AAA pathway; L-lysine from L-alpha-aminoadipate (fungal route): step 2/3. This Pyricularia oryzae (strain 70-15 / ATCC MYA-4617 / FGSC 8958) (Rice blast fungus) protein is Saccharopine dehydrogenase [NADP(+), L-glutamate-forming] (LYS3).